Consider the following 428-residue polypeptide: Serine--tRNA ligase (428 aa).

L-serine is bound at residue 231-233 (TAE). 262 to 264 (RSE) is a binding site for ATP. Glu285 lines the L-serine pocket. 349-352 (EISS) contacts ATP. Ser385 is an L-serine binding site.

Belongs to the class-II aminoacyl-tRNA synthetase family. Type-1 seryl-tRNA synthetase subfamily. As to quaternary structure, homodimer. The tRNA molecule binds across the dimer.

It localises to the cytoplasm. It carries out the reaction tRNA(Ser) + L-serine + ATP = L-seryl-tRNA(Ser) + AMP + diphosphate + H(+). The enzyme catalyses tRNA(Sec) + L-serine + ATP = L-seryl-tRNA(Sec) + AMP + diphosphate + H(+). The protein operates within aminoacyl-tRNA biosynthesis; selenocysteinyl-tRNA(Sec) biosynthesis; L-seryl-tRNA(Sec) from L-serine and tRNA(Sec): step 1/1. Functionally, catalyzes the attachment of serine to tRNA(Ser). Is also able to aminoacylate tRNA(Sec) with serine, to form the misacylated tRNA L-seryl-tRNA(Sec), which will be further converted into selenocysteinyl-tRNA(Sec). This chain is Serine--tRNA ligase, found in Staphylococcus carnosus (strain TM300).